The primary structure comprises 149 residues: MRWVKSSQPRKQRRALFNAPLHKRQKLMAAPLSPELRKQYGIRSLPVRVGDEVVIMRGDFKGHRGKVVRVDLRRMRIFVEGVTITNARGEPRYYPIHPSNVMIVSLNLDDERRRQIIERKRRQRELQLALMKAAAGGSAEAIGEEGKAS.

The protein belongs to the universal ribosomal protein uL24 family. As to quaternary structure, part of the 50S ribosomal subunit.

Its function is as follows. One of two assembly initiator proteins, it binds directly to the 5'-end of the 23S rRNA, where it nucleates assembly of the 50S subunit. Functionally, located at the polypeptide exit tunnel on the outside of the subunit. The chain is Large ribosomal subunit protein uL24 from Hyperthermus butylicus (strain DSM 5456 / JCM 9403 / PLM1-5).